Here is a 547-residue protein sequence, read N- to C-terminus: Glucose-6-phosphate isomerase (547 aa).

Residue glutamate 351 is the Proton donor of the active site. Active-site residues include histidine 382 and lysine 509.

It belongs to the GPI family.

It is found in the cytoplasm. The enzyme catalyses alpha-D-glucose 6-phosphate = beta-D-fructose 6-phosphate. It functions in the pathway carbohydrate biosynthesis; gluconeogenesis. It participates in carbohydrate degradation; glycolysis; D-glyceraldehyde 3-phosphate and glycerone phosphate from D-glucose: step 2/4. Its function is as follows. Catalyzes the reversible isomerization of glucose-6-phosphate to fructose-6-phosphate. The polypeptide is Glucose-6-phosphate isomerase (Coxiella burnetii (strain CbuK_Q154) (Coxiella burnetii (strain Q154))).